A 562-amino-acid chain; its full sequence is Sulfite reductase [NADPH] hemoprotein beta-component (562 aa).

Cys-425, Cys-431, Cys-470, and Cys-474 together coordinate [4Fe-4S] cluster. Residue Cys-474 participates in siroheme binding.

The protein belongs to the nitrite and sulfite reductase 4Fe-4S domain family. In terms of assembly, alpha(8)-beta(8). The alpha component is a flavoprotein, the beta component is a hemoprotein. It depends on siroheme as a cofactor. [4Fe-4S] cluster serves as cofactor.

It carries out the reaction hydrogen sulfide + 3 NADP(+) + 3 H2O = sulfite + 3 NADPH + 4 H(+). Its pathway is sulfur metabolism; hydrogen sulfide biosynthesis; hydrogen sulfide from sulfite (NADPH route): step 1/1. Component of the sulfite reductase complex that catalyzes the 6-electron reduction of sulfite to sulfide. This is one of several activities required for the biosynthesis of L-cysteine from sulfate. The polypeptide is Sulfite reductase [NADPH] hemoprotein beta-component (Tolumonas auensis (strain DSM 9187 / NBRC 110442 / TA 4)).